We begin with the raw amino-acid sequence, 310 residues long: Tagatose-6-phosphate kinase (310 aa).

Belongs to the carbohydrate kinase PfkB family. LacC subfamily.

It catalyses the reaction D-tagatofuranose 6-phosphate + ATP = D-tagatofuranose 1,6-bisphosphate + ADP + H(+). The protein operates within carbohydrate metabolism; D-tagatose 6-phosphate degradation; D-glyceraldehyde 3-phosphate and glycerone phosphate from D-tagatose 6-phosphate: step 1/2. The sequence is that of Tagatose-6-phosphate kinase from Staphylococcus epidermidis (strain ATCC 35984 / DSM 28319 / BCRC 17069 / CCUG 31568 / BM 3577 / RP62A).